The following is a 550-amino-acid chain: Carboxypeptidase Y homolog A (550 aa).

The first 18 residues, Met-1–Pro-18, serve as a signal peptide directing secretion. Residues Leu-19–Arg-131 constitute a propeptide that is removed on maturation. 5 disulfides stabilise this stretch: Cys-185–Cys-424, Cys-319–Cys-333, Cys-343–Cys-366, Cys-350–Cys-359, and Cys-388–Cys-394. An N-linked (GlcNAc...) asparagine glycan is attached at Asn-216. Ser-272 is an active-site residue. Asp-463 is a catalytic residue. 2 N-linked (GlcNAc...) asparagine glycosylation sites follow: Asn-493 and Asn-514. His-525 is an active-site residue.

Belongs to the peptidase S10 family.

It is found in the vacuole. It catalyses the reaction Release of a C-terminal amino acid with broad specificity.. Functionally, vacuolar carboxypeptidase involved in degradation of small peptides. Digests preferentially peptides containing an aliphatic or hydrophobic residue in P1' position, as well as methionine, leucine or phenylalanine in P1 position of ester substrate. The sequence is that of Carboxypeptidase Y homolog A (CPYA) from Paracoccidioides lutzii (strain ATCC MYA-826 / Pb01) (Paracoccidioides brasiliensis).